The following is a 121-amino-acid chain: UPF0145 protein SAV_4658 (121 aa).

The protein belongs to the UPF0145 family.

This chain is UPF0145 protein SAV_4658, found in Streptomyces avermitilis (strain ATCC 31267 / DSM 46492 / JCM 5070 / NBRC 14893 / NCIMB 12804 / NRRL 8165 / MA-4680).